Consider the following 168-residue polypeptide: SPbeta prophage-derived uncharacterized protein YonX (168 aa).

A coiled-coil region spans residues 1–53 (MNAQLFNLESRLDELENEINTQYCELDTNLDALKSNRIELESQLEKFESSLTN).

This is SPbeta prophage-derived uncharacterized protein YonX (yonX) from Bacillus subtilis (strain 168).